A 660-amino-acid polypeptide reads, in one-letter code: Probable Xaa-Pro aminopeptidase PTRG_10574 (660 aa).

Mn(2+) contacts are provided by Asp-274, Asp-285, Glu-435, and Glu-476. Residues 641 to 660 (SAGSGSTPLWKPHNKQDKKN) are disordered.

This sequence belongs to the peptidase M24B family. Requires Mn(2+) as cofactor.

The enzyme catalyses Release of any N-terminal amino acid, including proline, that is linked to proline, even from a dipeptide or tripeptide.. Functionally, catalyzes the removal of a penultimate prolyl residue from the N-termini of peptides. The protein is Probable Xaa-Pro aminopeptidase PTRG_10574 of Pyrenophora tritici-repentis (strain Pt-1C-BFP) (Wheat tan spot fungus).